A 492-amino-acid polypeptide reads, in one-letter code: Glycylpeptide N-tetradecanoyltransferase (492 aa).

The segment covering 1-22 (MSDSKDRKGKAPEGQSSEKKDG) has biased composition (basic and acidic residues). Positions 1-45 (MSDSKDRKGKAPEGQSSEKKDGAVNITPQMAESLLENNPALRNET) are disordered. Residues 82-85 (YKFW), 215-217 (LCI), and 223-227 (SKRLT) contribute to the tetradecanoyl-CoA site. Residue Leu-492 is the Proton acceptor; via carboxylate of the active site.

Belongs to the NMT family. In terms of assembly, monomer.

It localises to the cytoplasm. It carries out the reaction N-terminal glycyl-[protein] + tetradecanoyl-CoA = N-tetradecanoylglycyl-[protein] + CoA + H(+). Functionally, adds a myristoyl group to the N-terminal glycine residue of certain cellular proteins. The protein is Glycylpeptide N-tetradecanoyltransferase (nmt1) of Aspergillus fumigatus (strain ATCC MYA-4609 / CBS 101355 / FGSC A1100 / Af293) (Neosartorya fumigata).